A 984-amino-acid chain; its full sequence is Probable serine/threonine-protein kinase ireA (984 aa).

A signal peptide spans methionine 1–alanine 26. Residues tyrosine 27 to lysine 436 lie on the Extracellular side of the membrane. Disordered regions lie at residues tyrosine 70–lysine 91 and glutamate 137–lysine 157. 2 stretches are compositionally biased toward low complexity: residues serine 82–lysine 91 and serine 141–glutamate 150. Residue asparagine 228 is glycosylated (N-linked (GlcNAc...) asparagine). The segment at serine 352–asparagine 427 is disordered. Low complexity predominate over residues asparagine 356–lysine 397. N-linked (GlcNAc...) asparagine glycosylation occurs at asparagine 398. The helical transmembrane segment at asparagine 437–isoleucine 457 threads the bilayer. Topologically, residues arginine 458–tyrosine 984 are cytoplasmic. Residues asparagine 467 to threonine 533 are a coiled coil. Over residues asparagine 472–lysine 489 the composition is skewed to low complexity. The segment at asparagine 472–asparagine 518 is disordered. Residues lysine 490–asparagine 503 show a composition bias toward basic residues. Residues aspartate 509–asparagine 518 show a composition bias toward acidic residues. A Protein kinase domain is found at isoleucine 575 to phenylalanine 851. Residues leucine 581–isoleucine 589 and lysine 603 each bind ATP. Over residues proline 667–serine 676 the composition is skewed to polar residues. A disordered region spans residues proline 667–glutamine 692. Over residues asparagine 677–asparagine 691 the composition is skewed to low complexity. Aspartate 722 (proton acceptor) is an active-site residue. The KEN domain maps to valine 854 to tyrosine 984.

The protein belongs to the protein kinase superfamily. Ser/Thr protein kinase family.

It is found in the membrane. The catalysed reaction is L-seryl-[protein] + ATP = O-phospho-L-seryl-[protein] + ADP + H(+). It catalyses the reaction L-threonyl-[protein] + ATP = O-phospho-L-threonyl-[protein] + ADP + H(+). This chain is Probable serine/threonine-protein kinase ireA (ireA), found in Dictyostelium discoideum (Social amoeba).